A 372-amino-acid polypeptide reads, in one-letter code: Chaperone protein DnaJ (372 aa).

In terms of domain architecture, J spans 5-70; the sequence is DYYDLLEVSR…EKRAGYDRYG (66 aa). The CR-type zinc-finger motif lies at 134-212; it reads GIQAPIHYVT…CGGSGRKRDE (79 aa). Cysteine 147, cysteine 150, cysteine 164, cysteine 167, cysteine 186, cysteine 189, cysteine 200, and cysteine 203 together coordinate Zn(2+). 4 CXXCXGXG motif repeats span residues 147-154, 164-171, 186-193, and 200-207; these read CNTCQGTG, CNTCQGSG, CTTCYGEG, and CKKCGGSG.

The protein belongs to the DnaJ family. Homodimer. Zn(2+) serves as cofactor.

The protein resides in the cytoplasm. Its function is as follows. Participates actively in the response to hyperosmotic and heat shock by preventing the aggregation of stress-denatured proteins and by disaggregating proteins, also in an autonomous, DnaK-independent fashion. Unfolded proteins bind initially to DnaJ; upon interaction with the DnaJ-bound protein, DnaK hydrolyzes its bound ATP, resulting in the formation of a stable complex. GrpE releases ADP from DnaK; ATP binding to DnaK triggers the release of the substrate protein, thus completing the reaction cycle. Several rounds of ATP-dependent interactions between DnaJ, DnaK and GrpE are required for fully efficient folding. Also involved, together with DnaK and GrpE, in the DNA replication of plasmids through activation of initiation proteins. The chain is Chaperone protein DnaJ from Wolbachia pipientis subsp. Culex pipiens (strain wPip).